Reading from the N-terminus, the 294-residue chain is Metallophosphoesterase MPPED2 (294 aa).

The Mn(2+) site is built by D65, H67, D86, N117, and H213. 117 to 118 (NH) serves as a coordination point for GMP. GMP is bound by residues 225-226 (KE) and 252-255 (GIHE). H254 provides a ligand contact to Mn(2+).

It belongs to the UPF0046 family. Homodimer. Requires Mn(2+) as cofactor. Co(2+) is required as a cofactor.

Its activity is regulated as follows. Inhibited by nmolar levels of AMP and GMP. In terms of biological role, displays low metallophosphoesterase activity (in vitro). May play a role in the development of the nervous system. The polypeptide is Metallophosphoesterase MPPED2 (Mpped2) (Mus musculus (Mouse)).